Here is a 454-residue protein sequence, read N- to C-terminus: tRNA(Ile)-lysidine synthase (454 aa).

Position 31–36 (31–36) interacts with ATP; sequence SGGADS.

The protein belongs to the tRNA(Ile)-lysidine synthase family.

The protein localises to the cytoplasm. The catalysed reaction is cytidine(34) in tRNA(Ile2) + L-lysine + ATP = lysidine(34) in tRNA(Ile2) + AMP + diphosphate + H(+). Functionally, ligates lysine onto the cytidine present at position 34 of the AUA codon-specific tRNA(Ile) that contains the anticodon CAU, in an ATP-dependent manner. Cytidine is converted to lysidine, thus changing the amino acid specificity of the tRNA from methionine to isoleucine. This is tRNA(Ile)-lysidine synthase from Porphyromonas gingivalis (strain ATCC BAA-308 / W83).